We begin with the raw amino-acid sequence, 442 residues long: 2-oxoisovalerate dehydrogenase subunit alpha, mitochondrial (442 aa).

A mitochondrion-targeting transit peptide spans 1–42; that stretch reads MSAAKIWRPSRGLRQAALLLLGRSGVRGLARSHPSRQQQQQF. A disordered region spans residues 30-50; that stretch reads ARSHPSRQQQQQFPSLDDKPQ. Residues tyrosine 155 and arginine 156 each contribute to the thiamine diphosphate site. Serine 203 contributes to the K(+) binding site. Serine 204 contributes to the thiamine diphosphate binding site. The K(+) site is built by proline 205, threonine 208, and glutamine 209. Glutamate 235 contributes to the Mg(2+) binding site. 3 residues coordinate thiamine diphosphate: glycine 236, alanine 237, and arginine 262. Asparagine 264 and tyrosine 266 together coordinate Mg(2+). Position 333 (histidine 333) interacts with thiamine diphosphate. Serine 334 is modified (phosphoserine; by BCKDK). Threonine 335 bears the Phosphothreonine mark. A phosphoserine mark is found at serine 336 and serine 344. Lysine 353 is modified (N6-acetyllysine; alternate). Lysine 353 carries the N6-succinyllysine; alternate modification. Lysine 377 is subject to N6-succinyllysine.

This sequence belongs to the BCKDHA family. In terms of assembly, heterotetramer of 2 alpha/BCKDHA and 2 beta chains/BCKDHB that forms the branched-chain alpha-keto acid decarboxylase (E1) component of the BCKD complex. The branched-chain alpha-ketoacid dehydrogenase is a large complex composed of three major building blocks E1, E2 and E3. It is organized around E2, a 24-meric cubic core composed of DBT, to which are associated 6 to 12 copies of E1, and approximately 6 copies of the dehydrogenase E3, a DLD dimer. Interacts with PPM1K. It depends on thiamine diphosphate as a cofactor. Requires Mg(2+) as cofactor. Post-translationally, phosphorylated at Ser-334 by BCKDK and dephosphorylated by protein phosphatase PPM1K.

Its subcellular location is the mitochondrion matrix. It catalyses the reaction N(6)-[(R)-lipoyl]-L-lysyl-[protein] + 3-methyl-2-oxobutanoate + H(+) = N(6)-[(R)-S(8)-2-methylpropanoyldihydrolipoyl]-L-lysyl-[protein] + CO2. Its function is as follows. Together with BCKDHB forms the heterotetrameric E1 subunit of the mitochondrial branched-chain alpha-ketoacid dehydrogenase (BCKD) complex. The BCKD complex catalyzes the multi-step oxidative decarboxylation of alpha-ketoacids derived from the branched-chain amino-acids valine, leucine and isoleucine producing CO2 and acyl-CoA which is subsequently utilized to produce energy. The E1 subunit catalyzes the first step with the decarboxylation of the alpha-ketoacid forming an enzyme-product intermediate. A reductive acylation mediated by the lipoylamide cofactor of E2 extracts the acyl group from the E1 active site for the next step of the reaction. The chain is 2-oxoisovalerate dehydrogenase subunit alpha, mitochondrial from Mus musculus (Mouse).